The chain runs to 95 residues: UPF0473 protein PEPE_1260 (95 aa).

The protein belongs to the UPF0473 family.

This Pediococcus pentosaceus (strain ATCC 25745 / CCUG 21536 / LMG 10740 / 183-1w) protein is UPF0473 protein PEPE_1260.